The following is a 174-amino-acid chain: C-type lectin domain family 2 member A (174 aa).

At 1-27 (MINPELRDGRADGFIHRIVPKLIQNWK) the chain is on the cytoplasmic side. The chain crosses the membrane as a helical; Signal-anchor for type II membrane protein span at residues 28–48 (IGLMCFLSIIITTVCIIMIAT). Topologically, residues 49–174 (WSKHAKPVAC…WICSKPKYFL (126 aa)) are extracellular. An intrachain disulfide couples Cys-58 to Cys-69. The 110-residue stretch at 65-174 (VRDKCFYFSD…WICSKPKYFL (110 aa)) folds into the C-type lectin domain. N-linked (GlcNAc...) asparagine glycans are attached at residues Asn-78, Asn-130, and Asn-143. Cys-86 and Cys-167 are disulfide-bonded.

As to quaternary structure, homodimer; non-disulfide-linked. Interacts with KLRB1. Interacts with KLRF2. N-glycosylated. As to expression, mainly expressed in skin. Also expressed in keratinocytes, spleen, thymus, small intestine, peripheral blood monocytes, bone marrow, ovary, testis and skin. High expression in CD8(+), B-lymphocytes and naive CD4(+) T-cells. Restricted mostly to proliferating lymphocytes. Not detected in myeloid leukocytes or natural killer (NK) cells.

It is found in the cell membrane. Functionally, membrane-bound protein expressed mainly on keratinocytes which acts as a ligand to stimulate the activating receptor NKp65/KLRF2, expressed on the surface of natural killer (NK) cells. Facilitates thereby dedicated immune recognition of keratinocytes leading to natural killer cell mediated cytotoxicity. Also plays a role in modulating the extent of T-cell expansion. This is C-type lectin domain family 2 member A (CLEC2A) from Homo sapiens (Human).